The sequence spans 246 residues: Auxin-responsive protein IAA11 (246 aa).

An EAR-like (transcriptional repression) motif is present at residues 36-40 (LGLTL). A PB1 domain is found at 136–235 (SMFVKVTMDG…SVRRLRIMKT (100 aa)).

Belongs to the Aux/IAA family. Homodimers and heterodimers. Interacts with TPL. Preferentially expressed in stems and flowers.

The protein resides in the nucleus. In terms of biological role, aux/IAA proteins are short-lived transcriptional factors that function as repressors of early auxin response genes at low auxin concentrations. Repression is thought to result from the interaction with auxin response factors (ARFs), proteins that bind to the auxin-responsive promoter element (AuxRE). Formation of heterodimers with ARF proteins may alter their ability to modulate early auxin response genes expression. The chain is Auxin-responsive protein IAA11 (IAA11) from Arabidopsis thaliana (Mouse-ear cress).